A 639-amino-acid polypeptide reads, in one-letter code: Phosphomethylpyrimidine synthase (639 aa).

The tract at residues 49–71 is disordered; the sequence is DTPTDFGGEQNRPVRVYDTSGPY. Residues Asn-231, Met-260, Tyr-289, His-325, 345 to 347, 386 to 389, and Glu-425 contribute to the substrate site; these read SRG and DGLR. A Zn(2+)-binding site is contributed by His-429. Tyr-452 is a binding site for substrate. Zn(2+) is bound at residue His-493. [4Fe-4S] cluster-binding residues include Cys-573, Cys-576, and Cys-581.

The protein belongs to the ThiC family. Homodimer. It depends on [4Fe-4S] cluster as a cofactor.

The catalysed reaction is 5-amino-1-(5-phospho-beta-D-ribosyl)imidazole + S-adenosyl-L-methionine = 4-amino-2-methyl-5-(phosphooxymethyl)pyrimidine + CO + 5'-deoxyadenosine + formate + L-methionine + 3 H(+). Its pathway is cofactor biosynthesis; thiamine diphosphate biosynthesis. In terms of biological role, catalyzes the synthesis of the hydroxymethylpyrimidine phosphate (HMP-P) moiety of thiamine from aminoimidazole ribotide (AIR) in a radical S-adenosyl-L-methionine (SAM)-dependent reaction. In Teredinibacter turnerae (strain ATCC 39867 / T7901), this protein is Phosphomethylpyrimidine synthase.